Here is a 94-residue protein sequence, read N- to C-terminus: uncharacterized protein (94 aa).

This is an uncharacterized protein from Haemophilus influenzae (strain ATCC 51907 / DSM 11121 / KW20 / Rd).